The chain runs to 1039 residues: Alpha-mannosidase 2C1 (1039 aa).

4 residues coordinate Co(2+): His259, Asp261, Asp371, and His576. Asp371 functions as the Nucleophile in the catalytic mechanism.

The protein belongs to the glycosyl hydrolase 38 family. The cofactor is Co(2+). Expressed in kidney and liver (at protein level). Widely expressed, with highest levels in lung, ovary and testis. Also detected at lower levels in heart, brain, liver, spleen, kidney and thymus.

It is found in the cytoplasm. It carries out the reaction Hydrolysis of terminal, non-reducing alpha-D-mannose residues in alpha-D-mannosides.. With respect to regulation, inhibited by 1,4-dideoxy-1,4-imino-d-mannitol (DIM) and EDTA. In terms of biological role, cleaves alpha 1,2-, alpha 1,3-, and alpha 1,6-linked mannose residues from glycoproteins. Involved in the degradation of free oligosaccharides in the cytoplasm. The sequence is that of Alpha-mannosidase 2C1 from Mus musculus (Mouse).